Consider the following 207-residue polypeptide: Ribosomal RNA small subunit methyltransferase G (207 aa).

S-adenosyl-L-methionine-binding positions include glycine 73, leucine 78, 124-125 (VE), and arginine 139.

Belongs to the methyltransferase superfamily. RNA methyltransferase RsmG family.

The protein resides in the cytoplasm. The catalysed reaction is guanosine(527) in 16S rRNA + S-adenosyl-L-methionine = N(7)-methylguanosine(527) in 16S rRNA + S-adenosyl-L-homocysteine. Functionally, specifically methylates the N7 position of guanine in position 527 of 16S rRNA. The chain is Ribosomal RNA small subunit methyltransferase G from Escherichia coli (strain SMS-3-5 / SECEC).